An 89-amino-acid polypeptide reads, in one-letter code: UPF0223 protein BCA_4066 (89 aa).

It belongs to the UPF0223 family.

The polypeptide is UPF0223 protein BCA_4066 (Bacillus cereus (strain 03BB102)).